A 265-amino-acid polypeptide reads, in one-letter code: Urease accessory protein UreH (265 aa).

This sequence belongs to the UreD family. UreH, UreF and UreG form a complex that acts as a GTP-hydrolysis-dependent molecular chaperone, activating the urease apoprotein by helping to assemble the nickel containing metallocenter of UreC. The UreE protein probably delivers the nickel.

It localises to the cytoplasm. Required for maturation of urease via the functional incorporation of the urease nickel metallocenter. This is Urease accessory protein UreH from Helicobacter pylori (strain J99 / ATCC 700824) (Campylobacter pylori J99).